Here is a 70-residue protein sequence, read N- to C-terminus: NAD(P)H-quinone oxidoreductase subunit L (70 aa).

2 consecutive transmembrane segments (helical) span residues 2–22 and 39–59; these read IVPL…PVAL and TFMY…SPFV.

It belongs to the complex I NdhL subunit family. NDH-1 can be composed of about 15 different subunits; different subcomplexes with different compositions have been identified which probably have different functions.

The protein resides in the cellular thylakoid membrane. It catalyses the reaction a plastoquinone + NADH + (n+1) H(+)(in) = a plastoquinol + NAD(+) + n H(+)(out). The catalysed reaction is a plastoquinone + NADPH + (n+1) H(+)(in) = a plastoquinol + NADP(+) + n H(+)(out). Its function is as follows. NDH-1 shuttles electrons from an unknown electron donor, via FMN and iron-sulfur (Fe-S) centers, to quinones in the respiratory and/or the photosynthetic chain. The immediate electron acceptor for the enzyme in this species is believed to be plastoquinone. Couples the redox reaction to proton translocation, and thus conserves the redox energy in a proton gradient. Cyanobacterial NDH-1 also plays a role in inorganic carbon-concentration. The chain is NAD(P)H-quinone oxidoreductase subunit L from Trichormus variabilis (strain ATCC 29413 / PCC 7937) (Anabaena variabilis).